A 266-amino-acid chain; its full sequence is uncharacterized protein (266 aa).

The N-terminal stretch at 1 to 22 is a signal peptide; that stretch reads MRYLKKLAWFISVIILGIFIIG. Cys-23 carries the N-palmitoyl cysteine lipid modification. A lipid anchor (S-diacylglycerol cysteine) is attached at Cys-23.

The protein belongs to the staphylococcal tandem lipoprotein family.

The protein resides in the cell membrane. This is an uncharacterized protein from Staphylococcus aureus (strain USA300).